The following is a 109-amino-acid chain: Small ribosomal subunit protein bS16 (109 aa).

The tract at residues 87–109 (ALRETPKKSAPKAKAQERAKAAG) is disordered. Residues 100–109 (KAQERAKAAG) are compositionally biased toward basic and acidic residues.

This sequence belongs to the bacterial ribosomal protein bS16 family.

The protein is Small ribosomal subunit protein bS16 of Rhodospirillum centenum (strain ATCC 51521 / SW).